A 389-amino-acid chain; its full sequence is Nucleic acid dioxygenase ALKBH1 (389 aa).

The segment at 1–127 (MGKMAAAVAS…CLKLYSQKPN (127 aa)) is interaction with DNAJB6. The interval 86-389 (SKWRAYGLEG…VKRKRLNPNS (304 aa)) is tRNA-binding. Substrate is bound by residues W144 and 175–177 (YHY). Residues 213 to 347 (QAEAGILNYY…RVNMTVRQVL (135 aa)) form the Fe2OG dioxygenase domain. 220–222 (NYY) serves as a coordination point for 2-oxoglutarate. Fe cation is bound by residues H231, D233, and H287. D233 contacts substrate. Position 338 to 344 (338 to 344 (RVNMTVR)) interacts with 2-oxoglutarate.

In terms of assembly, monomer. Interacts with DNAJB6. It depends on Fe(2+) as a cofactor. As to expression, in adult organs, highly expressed in testis, eye, brain and kidney.

It is found in the nucleus. The enzyme catalyses an N(6)-methyl-2'-deoxyadenosine in DNA + 2-oxoglutarate + O2 = a 2'-deoxyadenosine in DNA + formaldehyde + succinate + CO2. It carries out the reaction 2'-deoxyribonucleotide-(2'-deoxyribose 5'-phosphate)-2'-deoxyribonucleotide-DNA = a 3'-end 2'-deoxyribonucleotide-(2,3-dehydro-2,3-deoxyribose 5'-phosphate)-DNA + a 5'-end 5'-phospho-2'-deoxyribonucleoside-DNA + H(+). The catalysed reaction is a methylated nucleobase within DNA + 2-oxoglutarate + O2 = a nucleobase within DNA + formaldehyde + succinate + CO2. It catalyses the reaction an N(1)-methyladenosine in tRNA + 2-oxoglutarate + O2 = an adenosine in tRNA + formaldehyde + succinate + CO2. The enzyme catalyses 5-methylcytidine(34) in mitochondrial tRNA(Met) + 2 2-oxoglutarate + 2 O2 = 5-formylcytidine(34) in mitochondrial tRNA(Met) + 2 succinate + 2 CO2 + H2O. It carries out the reaction an N(3)-methylcytidine in mRNA + 2-oxoglutarate + O2 = a cytidine in mRNA + formaldehyde + succinate + CO2. The catalysed reaction is N(1)-methyladenosine(58) in tRNA + 2-oxoglutarate + O2 = adenosine(58) in tRNA + formaldehyde + succinate + CO2. In terms of biological role, dioxygenase that acts on nucleic acids, such as DNA and tRNA. Requires molecular oxygen, alpha-ketoglutarate and iron. A number of activities have been described for this dioxygenase, but recent results suggest that it mainly acts on tRNAs and mediates their demethylation or oxidation depending on the context and subcellular compartment. Mainly acts as a tRNA demethylase by removing N(1)-methyladenine from various tRNAs, with a preference for N(1)-methyladenine at position 58 (m1A58) present on a stem loop structure of tRNAs. Acts as a regulator of translation initiation and elongation in response to glucose deprivation: regulates both translation initiation, by mediating demethylation of tRNA(Met), and translation elongation, N(1)-methyladenine-containing tRNAs being preferentially recruited to polysomes to promote translation elongation. In mitochondrion, specifically interacts with mt-tRNA(Met) and mediates oxidation of mt-tRNA(Met) methylated at cytosine(34) to form 5-formylcytosine (f(5)c) at this position. mt-tRNA(Met) containing the f(5)c modification at the wobble position enables recognition of the AUA codon in addition to the AUG codon, expanding codon recognition in mitochondrial translation. Specifically demethylates DNA methylated on the 6th position of adenine (N(6)-methyladenosine) DNA. N(6)-methyladenosine (m6A) DNA is present at some L1 elements in embryonic stem cells and probably promotes their silencing. Demethylates mRNAs containing N(3)-methylcytidine modification. Also able to repair alkylated single-stranded DNA by oxidative demethylation, but with low activity. Also has DNA lyase activity and introduces double-stranded breaks at abasic sites: cleaves both single-stranded DNA and double-stranded DNA at abasic sites, with the greatest activity towards double-stranded DNA with two abasic sites. DNA lyase activity does not require alpha-ketoglutarate and iron and leads to the formation of an irreversible covalent protein-DNA adduct with the 5' DNA product. DNA lyase activity is not required during base excision repair and class switch recombination of the immunoglobulin heavy chain during B lymphocyte activation. May play a role in placental trophoblast lineage differentiation. The chain is Nucleic acid dioxygenase ALKBH1 from Mus musculus (Mouse).